The primary structure comprises 148 residues: Large ribosomal subunit protein bL9 (148 aa).

Belongs to the bacterial ribosomal protein bL9 family.

Its function is as follows. Binds to the 23S rRNA. This Ectopseudomonas mendocina (strain ymp) (Pseudomonas mendocina) protein is Large ribosomal subunit protein bL9.